The chain runs to 410 residues: Mannosyl phosphorylinositol ceramide synthase regulatory protein CSG2 (410 aa).

A signal peptide spans 1-17 (MSTTLLWFSSVIGYVIQ). The Lumenal segment spans residues 18-50 (TKCLSNIQSKKEISVGPNGTIATPETNGDNGNS). N-linked (GlcNAc...) asparagine glycans are attached at residues Asn-35 and Asn-49. A helical membrane pass occupies residues 51 to 71 (SSLTFYLTFMYFASWLLLVPA). Residues 72–141 (SRLWEKMRPM…SVATFKYVAK (70 aa)) are Cytoplasmic-facing. The chain crosses the membrane as a helical span at residues 142–161 (LTVLALIMIVADLTYNMALS). At 162–167 (LSPAFD) the chain is on the lumenal side. Residues 168-187 (VALMQNTAIFEIVTLLYGVC) form a helical membrane-spanning segment. Topologically, residues 188–197 (GISRKNYVFR) are cytoplasmic. Residues 198 to 217 (NFLIMMNAVIGILIISYTKA) traverse the membrane as a helical segment. Over 218–245 (TCDMLAGKLSVNPNTGELSDPFLFDRLK) the chain is Lumenal. Residues 246–265 (GALICGLGALIMGPFAVLWN) form a helical membrane-spanning segment. At 266–285 (RWFCSNISKNENSAVVLVKQ) the chain is on the cytoplasmic side. The helical transmembrane segment at 286-305 (STHMALIGIIGMVILLPFIP) threads the bilayer. The Lumenal segment spans residues 306-324 (KFPSRESVESISLFYNDKS). Residues 325 to 344 (FWFSLLGSIIFGSLPSLISI) traverse the membrane as a helical segment. The Cytoplasmic segment spans residues 345 to 355 (LELNRKAPAEY). The helical transmembrane segment at 356–374 (LTTCNLGAIIFMGLAEWVC) threads the bilayer. The Lumenal portion of the chain corresponds to 375–385 (EPTQTTIVRWE). Residues 386–404 (VIGYIMLTVSLLVLSVTLG) traverse the membrane as a helical segment. Residues 405–410 (EGKYHH) are Cytoplasmic-facing.

Heterodimer of CSH1 and CSG2, and SUR1 and CSG2.

The protein resides in the endoplasmic reticulum membrane. Its function is as follows. Required for calcium regulation. May regulate calcium accumulation by a non-vacuole organelle. Also regulates the activity of CSH1 and SUR1 during mannosyl phosphorylinositol ceramide synthesis. The chain is Mannosyl phosphorylinositol ceramide synthase regulatory protein CSG2 (CSG2) from Saccharomyces cerevisiae (strain ATCC 204508 / S288c) (Baker's yeast).